The following is a 180-amino-acid chain: Translation initiation factor IF-3 (180 aa).

This sequence belongs to the IF-3 family. In terms of assembly, monomer.

The protein localises to the cytoplasm. Functionally, IF-3 binds to the 30S ribosomal subunit and shifts the equilibrium between 70S ribosomes and their 50S and 30S subunits in favor of the free subunits, thus enhancing the availability of 30S subunits on which protein synthesis initiation begins. The chain is Translation initiation factor IF-3 from Pasteurella multocida (strain Pm70).